Consider the following 28-residue polypeptide: DHPGVRDGTNIVLXKILPWGDEAYAAGG.

This chain is Unknown protein from spot 154 of 2D-PAGE of etiolated coleoptile, found in Zea mays (Maize).